Reading from the N-terminus, the 100-residue chain is NADH-quinone oxidoreductase subunit K (100 aa).

A run of 3 helical transmembrane segments spans residues 4 to 24, 28 to 48, and 60 to 80; these read LFHG…SLIV, ILFI…ALIV, and IMYI…LALL.

Belongs to the complex I subunit 4L family. NDH-1 is composed of 13 different subunits. Subunits NuoA, H, J, K, L, M, N constitute the membrane sector of the complex.

The protein localises to the cell membrane. The enzyme catalyses a quinone + NADH + 5 H(+)(in) = a quinol + NAD(+) + 4 H(+)(out). NDH-1 shuttles electrons from NADH, via FMN and iron-sulfur (Fe-S) centers, to quinones in the respiratory chain. The immediate electron acceptor for the enzyme in this species is believed to be ubiquinone. Couples the redox reaction to proton translocation (for every two electrons transferred, four hydrogen ions are translocated across the cytoplasmic membrane), and thus conserves the redox energy in a proton gradient. In Buchnera aphidicola subsp. Acyrthosiphon pisum (strain 5A), this protein is NADH-quinone oxidoreductase subunit K.